Here is a 556-residue protein sequence, read N- to C-terminus: MKTDIEIAQEAKMIHIREVAKSLGITEDDLDFYGKYKAKFTDELWDEIKDREDGKLILVTAINPTPAGEGKTTTTVGLGQAFGKLEKNAVIALREPSLGPCFGIKGGAAGGGYAQVVPMEDLNLHFTGDFHAITSANNLLAAMLDNHIQQGNTLGIDTNQIVWKRCVDMNDRVLRNIVVGLGRKADGVVREDHFIITVASEIMAILCLASDMNDLKERLSRIIVAYSYEGKPITAKDLHAVGSMAALLKDAIRPNLIQTLENTPAIIHGGPFANIAHGCNSVRATKTALKLADYVITEAGFGADLGAEKFLDIKCRIADLKPAAVVLVATIRALKYNGGVAKTDLSSENLEALEKGIVNLEKHIENIQKFGVPVVVTLNKFSTDTERELSYVKQFCEQRGCEFSLSEVWEKGGEGGIDLANKVIKTIETKESNYHVLYPNEMSLKEKMGTIAKEIYGADGVTFDSGALKEVERLTELGFGNLPVCMAKNQYSLSDDPSKLGRPTNFTVNIREVYVSAGAGFVVAITGTVMTMPGLPKVPAAEHIDVNEEGVITGLF.

An ATP-binding site is contributed by 65-72; it reads TPAGEGKT.

Belongs to the formate--tetrahydrofolate ligase family.

It carries out the reaction (6S)-5,6,7,8-tetrahydrofolate + formate + ATP = (6R)-10-formyltetrahydrofolate + ADP + phosphate. Its pathway is one-carbon metabolism; tetrahydrofolate interconversion. This is Formate--tetrahydrofolate ligase from Lachnoclostridium phytofermentans (strain ATCC 700394 / DSM 18823 / ISDg) (Clostridium phytofermentans).